A 154-amino-acid chain; its full sequence is MNIIQGNLVGTGLKIGIVVGRFNEFITSKLLSGAEDTLIRHGVESNDIDVAWVPGAFEIPFAAKKMAETKKYDAVITLGTVIRGATTHYDYVCNEAAKGIAQAGTATGVPVIFGIVTTETIEQAIERAGTKAGNKGADCAVSAIEMANLNRSFE.

5-amino-6-(D-ribitylamino)uracil contacts are provided by residues Phe-22, 56 to 58 (AFE), and 80 to 82 (TVI). Position 85 to 86 (85 to 86 (AT)) interacts with (2S)-2-hydroxy-3-oxobutyl phosphate. His-88 acts as the Proton donor in catalysis. Phe-113 lines the 5-amino-6-(D-ribitylamino)uracil pocket. Arg-127 lines the (2S)-2-hydroxy-3-oxobutyl phosphate pocket.

This sequence belongs to the DMRL synthase family. As to quaternary structure, forms an icosahedral capsid composed of 60 subunits, arranged as a dodecamer of pentamers.

It carries out the reaction (2S)-2-hydroxy-3-oxobutyl phosphate + 5-amino-6-(D-ribitylamino)uracil = 6,7-dimethyl-8-(1-D-ribityl)lumazine + phosphate + 2 H2O + H(+). The protein operates within cofactor biosynthesis; riboflavin biosynthesis; riboflavin from 2-hydroxy-3-oxobutyl phosphate and 5-amino-6-(D-ribitylamino)uracil: step 1/2. In terms of biological role, catalyzes the formation of 6,7-dimethyl-8-ribityllumazine by condensation of 5-amino-6-(D-ribitylamino)uracil with 3,4-dihydroxy-2-butanone 4-phosphate. This is the penultimate step in the biosynthesis of riboflavin. This chain is 6,7-dimethyl-8-ribityllumazine synthase, found in Bacillus amyloliquefaciens (Bacillus velezensis).